The chain runs to 357 residues: Cobalt-precorrin-5B C(1)-methyltransferase (357 aa).

Belongs to the CbiD family.

The enzyme catalyses Co-precorrin-5B + S-adenosyl-L-methionine = Co-precorrin-6A + S-adenosyl-L-homocysteine. It functions in the pathway cofactor biosynthesis; adenosylcobalamin biosynthesis; cob(II)yrinate a,c-diamide from sirohydrochlorin (anaerobic route): step 6/10. In terms of biological role, catalyzes the methylation of C-1 in cobalt-precorrin-5B to form cobalt-precorrin-6A. This is Cobalt-precorrin-5B C(1)-methyltransferase from Alkaliphilus oremlandii (strain OhILAs) (Clostridium oremlandii (strain OhILAs)).